We begin with the raw amino-acid sequence, 1435 residues long: Protein clueless (1435 aa).

The disordered stretch occupies residues 1-97; sequence MALEMDSKNS…KPEGDGDADA (97 aa). The segment covering 18–35 has biased composition (low complexity); the sequence is AAAATTKTNKAKENNNLA. The segment covering 38–50 has biased composition (polar residues); sequence KKNQSQNLVNGNG. Residues 58–67 are compositionally biased toward basic residues; sequence TKKKGKKNRN. At serine 266 the chain carries Phosphoserine. One can recognise a Clu domain in the interval 420 to 662; it reads RAEDAFSSKL…RTFPPDVNFL (243 aa). Basic and acidic residues-rich tracts occupy residues 719–731 and 752–762; these read KKPE…EKKQ and PNEKEKDTPVE. Disordered regions lie at residues 719-762 and 952-998; these read KKPE…TPVE and VSND…SSSS. Basic residues predominate over residues 959-975; it reads KKRGGNGGKHNKHKSSK. The segment covering 988 to 998 has biased composition (low complexity); the sequence is NGGSTTSSSSS. 3 TPR repeats span residues 1096–1129, 1222–1255, and 1257–1290; these read AYNF…LNNV, ALID…NLKY, and GNKA…EKET. Residues 1407–1435 form a disordered region; the sequence is EVLAPQDNNKEQAATAQQLTNGDKVAVSS. Residues 1417 to 1435 are compositionally biased toward polar residues; that stretch reads EQAATAQQLTNGDKVAVSS.

This sequence belongs to the CLU family.

The protein resides in the cytoplasm. In terms of biological role, mRNA-binding protein involved in proper cytoplasmic distribution of mitochondria. The chain is Protein clueless from Drosophila persimilis (Fruit fly).